The following is a 123-amino-acid chain: Histone H2B.1/H2B.2 (123 aa).

The segment at 1–30 is disordered; sequence MPPKVSGKAAKKAGKAQKNITKGDKKKNRK. Residue serine 110 is glycosylated (O-linked (GlcNAc) serine). A Glycyl lysine isopeptide (Lys-Gly) (interchain with G-Cter in ubiquitin) cross-link involves residue lysine 118.

It belongs to the histone H2B family. The nucleosome is a histone octamer containing two molecules each of H2A, H2B, H3 and H4 assembled in one H3-H4 heterotetramer and two H2A-H2B heterodimers. The octamer wraps approximately 147 bp of DNA. Monoubiquitination of Lys-118 gives a specific tag for epigenetic transcriptional activation and is also prerequisite for histone H3 'Lys-4' and 'Lys-79' methylation. In terms of processing, glcNAcylation at Ser-110 promotes monoubiquitination of Lys-118. It fluctuates in response to extracellular glucose, and associates with transcribed genes.

The protein localises to the nucleus. It localises to the chromosome. In terms of biological role, core component of nucleosome. Nucleosomes wrap and compact DNA into chromatin, limiting DNA accessibility to the cellular machineries which require DNA as a template. Histones thereby play a central role in transcription regulation, DNA repair, DNA replication and chromosomal stability. DNA accessibility is regulated via a complex set of post-translational modifications of histones, also called histone code, and nucleosome remodeling. The sequence is that of Histone H2B.1/H2B.2 from Tigriopus californicus (Marine copepod).